Consider the following 781-residue polypeptide: MTSQHSAKKSSKNTPKNNRTFKGFLLKFSFTALVLTIFYGGYLDWQIRSKMDGQIWHLPAEVYSRLESVKIADNLAFDEVIQILLDNEYRQTTMVAAPGDFKLEDDSIVVLRRAFPFPDKAEPQRVLRLRFSHNKLSRIEDLVTVKTVDEFRLAPKLIAMLQSDNEDRLAIPLQNYPRLLIDTLILTEDRRFYEHNGINPVGILRALIANIRAGQTVQGGSTLTQQLVKNLFLSRERTITRKANEALMSLVLDWRYDKNRILETYLNEIYLGQNGDTQIHGFELASQFYFGRSIREISLDQIALLVGMVKGPSLYNPWRNPQNALERRNIVLRLMLEHKMIGDELYQLLSQRPLGVQKKGQISRKYPAFIQTLQADLRRKLGEHKISSLLGARIFSTMDLKQQAQAENAVGNTVSQLQLKMKNPHLEGAMIITDYRTGEIRAVVGGLQTQYAGFNRALMAKRQIGSLVKPSIYLTALSNPEQFRLNTPINNQPITINVKGSPPWQPRNYDKKYSDSVMLMDALARSLNIPTVNIGMKVGLSKVIDTQKAMGWDNVEIPKVPAMLLGSYTISPYDVTKLYQTLANQGGRIALTTVDSIADRQGNLIFQHDKSAKQVVPQEAAFQTLFAMQQTVERGTARSLQKDYADLHLAGKTGTTNESRDTWFVGIDGKNISTVWLGRDDNGETKLTGASGALQIYKDYLNRTNIEKLAITPPTTVKWVGINQYGDWDCESYRTIPIWLNNGQNFCGETSSPSLTPTTETETPPQESLWDVLDNPNPPAQ.

The tract at residues 151–322 (FRLAPKLIAM…SLYNPWRNPQ (172 aa)) is transglycosylase. Glu-188 acts as the Proton donor; for transglycosylase activity in catalysis. The transpeptidase stretch occupies residues 415 to 702 (SQLQLKMKNP…ALQIYKDYLN (288 aa)). The Acyl-ester intermediate; for transpeptidase activity role is filled by Ser-466. Low complexity predominate over residues 749-768 (ETSSPSLTPTTETETPPQES). The segment at 749 to 781 (ETSSPSLTPTTETETPPQESLWDVLDNPNPPAQ) is disordered.

This sequence in the N-terminal section; belongs to the glycosyltransferase 51 family. The protein in the C-terminal section; belongs to the transpeptidase family.

The protein localises to the cell inner membrane. It carries out the reaction [GlcNAc-(1-&gt;4)-Mur2Ac(oyl-L-Ala-gamma-D-Glu-L-Lys-D-Ala-D-Ala)](n)-di-trans,octa-cis-undecaprenyl diphosphate + beta-D-GlcNAc-(1-&gt;4)-Mur2Ac(oyl-L-Ala-gamma-D-Glu-L-Lys-D-Ala-D-Ala)-di-trans,octa-cis-undecaprenyl diphosphate = [GlcNAc-(1-&gt;4)-Mur2Ac(oyl-L-Ala-gamma-D-Glu-L-Lys-D-Ala-D-Ala)](n+1)-di-trans,octa-cis-undecaprenyl diphosphate + di-trans,octa-cis-undecaprenyl diphosphate + H(+). The enzyme catalyses Preferential cleavage: (Ac)2-L-Lys-D-Ala-|-D-Ala. Also transpeptidation of peptidyl-alanyl moieties that are N-acyl substituents of D-alanine.. It functions in the pathway cell wall biogenesis; peptidoglycan biosynthesis. In terms of biological role, cell wall formation. Synthesis of cross-linked peptidoglycan from the lipid intermediates. The enzyme has a penicillin-insensitive transglycosylase N-terminal domain (formation of linear glycan strands) and a penicillin-sensitive transpeptidase C-terminal domain (cross-linking of the peptide subunits). The chain is Penicillin-binding protein 1B (mrcB) from Haemophilus influenzae (strain ATCC 51907 / DSM 11121 / KW20 / Rd).